The chain runs to 76 residues: U14-hexatoxin-Hi1a (76 aa).

The signal sequence occupies residues 1–18 (MMQLAVLICLSLVVNTFA). 3 disulfide bridges follow: Cys-21/Cys-34, Cys-27/Cys-39, and Cys-33/Cys-61.

In terms of tissue distribution, expressed by the venom gland.

The protein localises to the secreted. In terms of biological role, probable ion channel inhibitor. This is U14-hexatoxin-Hi1a from Hadronyche infensa (Fraser island funnel-web spider).